The primary structure comprises 499 residues: Probable 2-isopropylmalate synthase (499 aa).

Residues 5–256 (VRIFDTTLRD…ELDVRTEMLV (252 aa)) form the Pyruvate carboxyltransferase domain. The a divalent metal cation site is built by aspartate 14, histidine 194, histidine 196, and asparagine 230.

Belongs to the alpha-IPM synthase/homocitrate synthase family. As to quaternary structure, homodimer. A divalent metal cation serves as cofactor.

It carries out the reaction 3-methyl-2-oxobutanoate + acetyl-CoA + H2O = (2S)-2-isopropylmalate + CoA + H(+). It participates in amino-acid biosynthesis; L-leucine biosynthesis; L-leucine from 3-methyl-2-oxobutanoate: step 1/4. Its function is as follows. Catalyzes the condensation of the acetyl group of acetyl-CoA with 3-methyl-2-oxobutanoate (2-oxoisovalerate) to form 3-carboxy-3-hydroxy-4-methylpentanoate (2-isopropylmalate). The polypeptide is Probable 2-isopropylmalate synthase (leuA) (Methanopyrus kandleri (strain AV19 / DSM 6324 / JCM 9639 / NBRC 100938)).